The sequence spans 365 residues: Chorismate synthase (365 aa).

The NADP(+) site is built by Arg-48 and Arg-54. Residues 125-127 (RSS), 238-239 (NA), Ala-278, 293-297 (KPTSS), and Arg-319 contribute to the FMN site.

It belongs to the chorismate synthase family. In terms of assembly, homotetramer. FMNH2 serves as cofactor.

It carries out the reaction 5-O-(1-carboxyvinyl)-3-phosphoshikimate = chorismate + phosphate. It functions in the pathway metabolic intermediate biosynthesis; chorismate biosynthesis; chorismate from D-erythrose 4-phosphate and phosphoenolpyruvate: step 7/7. Functionally, catalyzes the anti-1,4-elimination of the C-3 phosphate and the C-6 proR hydrogen from 5-enolpyruvylshikimate-3-phosphate (EPSP) to yield chorismate, which is the branch point compound that serves as the starting substrate for the three terminal pathways of aromatic amino acid biosynthesis. This reaction introduces a second double bond into the aromatic ring system. This Pseudoalteromonas translucida (strain TAC 125) protein is Chorismate synthase.